Consider the following 299-residue polypeptide: ATP phosphoribosyltransferase (299 aa).

This sequence belongs to the ATP phosphoribosyltransferase family. Long subfamily. Equilibrium between an active dimeric form, an inactive hexameric form and higher aggregates. Interconversion between the various forms is largely reversible and is influenced by the natural substrates and inhibitors of the enzyme. Mg(2+) serves as cofactor.

The protein localises to the cytoplasm. The catalysed reaction is 1-(5-phospho-beta-D-ribosyl)-ATP + diphosphate = 5-phospho-alpha-D-ribose 1-diphosphate + ATP. It functions in the pathway amino-acid biosynthesis; L-histidine biosynthesis; L-histidine from 5-phospho-alpha-D-ribose 1-diphosphate: step 1/9. Feedback inhibited by histidine. In terms of biological role, catalyzes the condensation of ATP and 5-phosphoribose 1-diphosphate to form N'-(5'-phosphoribosyl)-ATP (PR-ATP). Has a crucial role in the pathway because the rate of histidine biosynthesis seems to be controlled primarily by regulation of HisG enzymatic activity. The chain is ATP phosphoribosyltransferase from Buchnera aphidicola subsp. Schlechtendalia chinensis.